A 76-amino-acid chain; its full sequence is MKKEKGSRRKKRVCAFCVDKIVDVDYKDVNRLKKYITERGKILPRRISGNCARHQRRLTTAIKRARIMALLPFTVE.

It belongs to the bacterial ribosomal protein bS18 family. As to quaternary structure, part of the 30S ribosomal subunit. Forms a tight heterodimer with protein bS6.

In terms of biological role, binds as a heterodimer with protein bS6 to the central domain of the 16S rRNA, where it helps stabilize the platform of the 30S subunit. The polypeptide is Small ribosomal subunit protein bS18 (Carboxydothermus hydrogenoformans (strain ATCC BAA-161 / DSM 6008 / Z-2901)).